Here is a 701-residue protein sequence, read N- to C-terminus: Sulfate anion transporter 1 (701 aa).

The disordered stretch occupies residues 1–20 (MDESPEPLQQGRGPVPVRRQ). A run of 2 helical transmembrane segments spans residues 68 to 90 (YLAG…AIAY) and 94 to 116 (AGLQ…FLMG). 2 N-linked (GlcNAc...) asparagine glycosylation sites follow: asparagine 158 and asparagine 163. 7 helical membrane passes run 176-198 (YAIR…MGVL), 255-277 (GAGQ…LLAA), 290-309 (VPLP…SHFG), 342-364 (ALDA…EMFA), 377-399 (LLAV…SAAL), 412-434 (TQLS…APLF), and 472-494 (LVWA…LAGV). Residues 527-687 (EFEGLVPEPG…LSVHDAVQTA (161 aa)) enclose the STAS domain.

This sequence belongs to the SLC26A/SulP transporter (TC 2.A.53) family. Expressed most abundantly in the kidney and liver, with lower levels in the pancreas, testis, brain, small intestine, colon, and lung.

It localises to the cell membrane. The protein localises to the basolateral cell membrane. It catalyses the reaction thiosulfate(in) + sulfate(out) = thiosulfate(out) + sulfate(in). The catalysed reaction is 2 hydrogencarbonate(out) + sulfate(in) = 2 hydrogencarbonate(in) + sulfate(out). The enzyme catalyses oxalate(in) + sulfate(out) = oxalate(out) + sulfate(in). It carries out the reaction oxalate(in) + 2 hydrogencarbonate(out) = oxalate(out) + 2 hydrogencarbonate(in). Functionally, sodium-independent sulfate anion transporter. Can transport other anions including bicarbonate, thiosulfate and oxalate by mediating sulfate-thiosulfate, sulfate-hydrogencarbonate and sulfate-oxalate anion exchange. Mediates oxalate-hydrogencarbonate anion exchange. This is Sulfate anion transporter 1 (SLC26A1) from Homo sapiens (Human).